Here is a 229-residue protein sequence, read N- to C-terminus: 5'-methylthioadenosine/S-adenosylhomocysteine nucleosidase (229 aa).

The active-site Proton acceptor is Glu-12. Substrate is bound by residues Gly-78, Ile-152, and Met-173 to Glu-174. Residue Asp-197 is the Proton donor of the active site.

The protein belongs to the PNP/UDP phosphorylase family. MtnN subfamily.

It carries out the reaction S-adenosyl-L-homocysteine + H2O = S-(5-deoxy-D-ribos-5-yl)-L-homocysteine + adenine. The enzyme catalyses S-methyl-5'-thioadenosine + H2O = 5-(methylsulfanyl)-D-ribose + adenine. The catalysed reaction is 5'-deoxyadenosine + H2O = 5-deoxy-D-ribose + adenine. It functions in the pathway amino-acid biosynthesis; L-methionine biosynthesis via salvage pathway; S-methyl-5-thio-alpha-D-ribose 1-phosphate from S-methyl-5'-thioadenosine (hydrolase route): step 1/2. Its function is as follows. Catalyzes the irreversible cleavage of the glycosidic bond in both 5'-methylthioadenosine (MTA) and S-adenosylhomocysteine (SAH/AdoHcy) to adenine and the corresponding thioribose, 5'-methylthioribose and S-ribosylhomocysteine, respectively. Also cleaves 5'-deoxyadenosine, a toxic by-product of radical S-adenosylmethionine (SAM) enzymes, into 5-deoxyribose and adenine. In Haemophilus influenzae (strain PittEE), this protein is 5'-methylthioadenosine/S-adenosylhomocysteine nucleosidase.